The primary structure comprises 151 residues: MATQDDAHLAELKKKRTFRKFMYRGVDLDQLLDMSREQFTKLLPCRMRRRLDRGLKRKHLALIAKVQKAKKAAGVLEKPATVKTHLRDMIILPELVGGVIGIYNGKVFNQTEIKPEMIGFYLGEFAISYKPVKHGRPGIGATHSSRFIPLK.

Ala-2 is subject to N-acetylalanine.

This sequence belongs to the universal ribosomal protein uS19 family.

In terms of biological role, negatively regulates lifespan. This chain is Small ribosomal subunit protein uS19, found in Caenorhabditis elegans.